A 706-amino-acid polypeptide reads, in one-letter code: 1,4-alpha-glucan-branching enzyme (706 aa).

The (1,4-alpha-D-glucosyl)n site is built by Trp96 and Lys133. Asp358 acts as the Nucleophile in catalysis. Residue Glu419 is the Proton donor of the active site.

The protein belongs to the glycosyl hydrolase 13 family. GlgB subfamily. Monomer.

It localises to the cytoplasm. It carries out the reaction Transfers a segment of a (1-&gt;4)-alpha-D-glucan chain to a primary hydroxy group in a similar glucan chain.. It participates in glycan biosynthesis; glycogen biosynthesis. In terms of biological role, glycogen-branching enzyme participates in the glycogen biosynthetic process along with glycogenin and glycogen synthase. Generates alpha-1,6-glucosidic branches from alpha-1,4-linked glucose chains, to increase solubility of the glycogen polymer. The polypeptide is 1,4-alpha-glucan-branching enzyme (GLC3) (Candida glabrata (strain ATCC 2001 / BCRC 20586 / JCM 3761 / NBRC 0622 / NRRL Y-65 / CBS 138) (Yeast)).